The chain runs to 117 residues: Large ribosomal subunit protein bL20 (117 aa).

This sequence belongs to the bacterial ribosomal protein bL20 family.

Its function is as follows. Binds directly to 23S ribosomal RNA and is necessary for the in vitro assembly process of the 50S ribosomal subunit. It is not involved in the protein synthesizing functions of that subunit. This is Large ribosomal subunit protein bL20 from Geotalea uraniireducens (strain Rf4) (Geobacter uraniireducens).